Consider the following 290-residue polypeptide: MKRTPHLLAIQSHVVFGHAGNSAAVFPMQRVGVNVWPLNTVQFSNHTQYGQWAGEVLAPAQIPALVEGISNIGELGNCDAVLSGYLGSAEQGRAILAGVARIKAVNPKALYLCDPVMGHAEKGCIVPAEVSEFLLEEAVAKADILCPNQLELDSFCGRRAESLEDCVGMARGLLERGPRIVLVKHLNYPGRADDAFEMLLVTGEESWHLRRPLLAFPRQPVGVGDLTSGLFMARLLLGDSDVQAFEFAAAAVHEVLLETQACASYELQLVRAQDRIAHPRVRFEAQRLLY.

Substrate-binding positions include Ser-12 and 47–48 (TQ). Residues Asp-114, Glu-151, Lys-184, and 211–214 (RPLL) contribute to the ATP site. Asp-225 is a binding site for substrate.

Belongs to the pyridoxine kinase family. PdxY subfamily. As to quaternary structure, homodimer. It depends on Mg(2+) as a cofactor.

It catalyses the reaction pyridoxal + ATP = pyridoxal 5'-phosphate + ADP + H(+). It participates in cofactor metabolism; pyridoxal 5'-phosphate salvage; pyridoxal 5'-phosphate from pyridoxal: step 1/1. In terms of biological role, pyridoxal kinase involved in the salvage pathway of pyridoxal 5'-phosphate (PLP). Catalyzes the phosphorylation of pyridoxal to PLP. In Pseudomonas entomophila (strain L48), this protein is Pyridoxal kinase PdxY.